The following is a 315-amino-acid chain: Diacylglycerol kinase (315 aa).

The DAGKc domain occupies 1 to 132 (MRKRARIIYN…VDIGKMNNRY (132 aa)). Residues 10-14 (NPTSG), Thr41, 67-73 (GDGTLNE), and Thr94 each bind ATP. Mg(2+)-binding residues include Lys213, Asp216, and Tyr218. Glu273 (proton acceptor) is an active-site residue.

The protein belongs to the diacylglycerol/lipid kinase family. Homodimer. Mg(2+) serves as cofactor.

The enzyme catalyses a 1,2-diacyl-sn-glycerol + ATP = a 1,2-diacyl-sn-glycero-3-phosphate + ADP + H(+). In terms of biological role, catalyzes the phosphorylation of diacylglycerol (DAG) into phosphatidic acid. Is a key enzyme involved in the production of lipoteichoic acid by reintroducing DAG formed from the breakdown of membrane phospholipids into the phosphatidylglycerol biosynthetic pathway. This is Diacylglycerol kinase (dagK) from Staphylococcus aureus (strain USA300 / TCH1516).